Reading from the N-terminus, the 399-residue chain is tRNA-specific 2-thiouridylase MnmA (399 aa).

Residues 7–14 (AMSGGVDS) and M33 contribute to the ATP site. Residue C128 is the Nucleophile of the active site. The cysteines at positions 128 and 224 are disulfide-linked. G152 provides a ligand contact to ATP. Residues 174–176 (KDQ) are interaction with tRNA. C224 acts as the Cysteine persulfide intermediate in catalysis. The tract at residues 333-334 (RY) is interaction with tRNA.

This sequence belongs to the MnmA/TRMU family.

The protein localises to the cytoplasm. The enzyme catalyses S-sulfanyl-L-cysteinyl-[protein] + uridine(34) in tRNA + AH2 + ATP = 2-thiouridine(34) in tRNA + L-cysteinyl-[protein] + A + AMP + diphosphate + H(+). Catalyzes the 2-thiolation of uridine at the wobble position (U34) of tRNA, leading to the formation of s(2)U34. This chain is tRNA-specific 2-thiouridylase MnmA, found in Rhodopirellula baltica (strain DSM 10527 / NCIMB 13988 / SH1).